Reading from the N-terminus, the 864-residue chain is Leucine--tRNA ligase (864 aa).

A 'HIGH' region motif is present at residues 50-60 (PYPSGKIHMGH). The 'KMSKS' region signature appears at 622 to 626 (KMSKS). Residue lysine 625 participates in ATP binding.

This sequence belongs to the class-I aminoacyl-tRNA synthetase family.

It is found in the cytoplasm. The catalysed reaction is tRNA(Leu) + L-leucine + ATP = L-leucyl-tRNA(Leu) + AMP + diphosphate. The chain is Leucine--tRNA ligase from Acidiphilium cryptum (strain JF-5).